The chain runs to 193 residues: dTTP/UTP pyrophosphatase (193 aa).

The active-site Proton acceptor is D71.

Belongs to the Maf family. YhdE subfamily. A divalent metal cation serves as cofactor.

The protein resides in the cytoplasm. The catalysed reaction is dTTP + H2O = dTMP + diphosphate + H(+). It carries out the reaction UTP + H2O = UMP + diphosphate + H(+). Its function is as follows. Nucleoside triphosphate pyrophosphatase that hydrolyzes dTTP and UTP. May have a dual role in cell division arrest and in preventing the incorporation of modified nucleotides into cellular nucleic acids. In Citrifermentans bemidjiense (strain ATCC BAA-1014 / DSM 16622 / JCM 12645 / Bem) (Geobacter bemidjiensis), this protein is dTTP/UTP pyrophosphatase.